The following is a 739-amino-acid chain: MMNEPTPKEIKETRLYAEWGLTDEEYHQIETILQREPNYTETGLFSVMWSEHCSYKNSKPVLKKFPTEGPQVLQGPGEGAGIVDIGDGLAVVFKAESHNHPSAVEPYEGAATGVGGIIRDIFSMGARPIALLDSLRFGELTDARTRYLFQEVVAGISGYGNCIGIPTVGGEIAFEPCYQGNPLVNAMCVGLIRHDEIQKGQAKGVGNSILYVGAKTGRDGIHGATFASEEFSEGEEQQRSAVQVGDPFMEKLLLEACLDLIKNHQDILIGIQDMGAAGLVSSSAEMASKAGSGLILELDKVPQRETQMSPYEMLLSESQERMLICVEKGAEQQVCELFQTYDLEAVAIGSVTDDGQYRVFHGGKIVADVPVDALAEEAPVYQKAYQEPERMRAFKKLAPFIPEITNSTELLKRLLQQPTIASKKSVYETYDSQVQTNTVVQPGSDAAVLRVRGTNKALAMTTDCNSRYLYLNPEIGGQIAVAEAARNIVASGAQPLAITDCLNYGSPDKPESFWELWTSADGIAAACRQLGTPVISGNVSLYNETDGQAIYPTPMIGMVGVIEDVSQITTQAFKQVDDLIYLIGETHADFNGSEIQKIQLGRIEGQLRSFDLKEEKANQELVLKAIQVGLVASAHDCAEGGVAVALAESAFANELGLQVTLPLKKEYLFAETQSRFILSVSPQHQEAFETLIGRKAQHIGKVTETGLVIHALDDVINCSTKEAKALWEDAIPCLMKQKA.

The active site involves histidine 52. Residues tyrosine 55 and lysine 94 each contribute to the ATP site. Residue glutamate 96 coordinates Mg(2+). Substrate-binding positions include 97–100 (SHNH) and arginine 119. The active-site Proton acceptor is the histidine 98. Aspartate 120 is a Mg(2+) binding site. Residue glutamine 243 coordinates substrate. Aspartate 273 is a Mg(2+) binding site. 317-319 (ESQ) lines the substrate pocket. 2 residues coordinate ATP: aspartate 500 and glycine 537. A Mg(2+)-binding site is contributed by asparagine 538. A substrate-binding site is contributed by serine 540.

The protein belongs to the FGAMS family. Monomer. Part of the FGAM synthase complex composed of 1 PurL, 1 PurQ and 2 PurS subunits.

It localises to the cytoplasm. It carries out the reaction N(2)-formyl-N(1)-(5-phospho-beta-D-ribosyl)glycinamide + L-glutamine + ATP + H2O = 2-formamido-N(1)-(5-O-phospho-beta-D-ribosyl)acetamidine + L-glutamate + ADP + phosphate + H(+). It functions in the pathway purine metabolism; IMP biosynthesis via de novo pathway; 5-amino-1-(5-phospho-D-ribosyl)imidazole from N(2)-formyl-N(1)-(5-phospho-D-ribosyl)glycinamide: step 1/2. Functionally, part of the phosphoribosylformylglycinamidine synthase complex involved in the purines biosynthetic pathway. Catalyzes the ATP-dependent conversion of formylglycinamide ribonucleotide (FGAR) and glutamine to yield formylglycinamidine ribonucleotide (FGAM) and glutamate. The FGAM synthase complex is composed of three subunits. PurQ produces an ammonia molecule by converting glutamine to glutamate. PurL transfers the ammonia molecule to FGAR to form FGAM in an ATP-dependent manner. PurS interacts with PurQ and PurL and is thought to assist in the transfer of the ammonia molecule from PurQ to PurL. In Enterococcus faecalis (strain ATCC 700802 / V583), this protein is Phosphoribosylformylglycinamidine synthase subunit PurL.